The chain runs to 260 residues: Snake venom serine protease gussurobin (260 aa).

An N-terminal signal peptide occupies residues 1-18; the sequence is MVLIRVLANLLILQLSYA. A propeptide spanning residues 19–24 is cleaved from the precursor; sequence QKSSEL. The region spanning 25-251 is the Peptidase S1 domain; that stretch reads IIGGDECNIN…YTEWIQSTIA (227 aa). 6 disulfides stabilise this stretch: Cys31-Cys165, Cys52-Cys68, Cys100-Cys258, Cys144-Cys212, Cys176-Cys191, and Cys202-Cys227. Residues His67 and Asp112 each act as charge relay system in the active site. 2 N-linked (GlcNAc...) asparagine glycosylation sites follow: Asn123 and Asn124. Residue Ser206 is the Charge relay system of the active site.

This sequence belongs to the peptidase S1 family. Snake venom subfamily. Monomer. In terms of tissue distribution, expressed by the venom gland.

It is found in the secreted. In terms of biological role, snake venom serine protease that may act in the hemostasis system of the prey. This chain is Snake venom serine protease gussurobin, found in Gloydius ussuriensis (Ussuri mamushi).